Reading from the N-terminus, the 187-residue chain is Putative protein SSX8 (187 aa).

Disordered stretches follow at residues 1–21 (MNGDDAFAKRPRDDDKASEKR) and 109–187 (PKIM…EDDE). The KRAB-related domain maps to 20–83 (KRSKAFNDIA…KQATDFQGNY (64 aa)). Serine 123 carries the phosphoserine modification. Over residues 152–168 (KRSGPKRGRHAWTHRLR) the composition is skewed to basic residues.

Belongs to the SSX family. Not detected in any normal or tumor tissues.

In terms of biological role, could act as a modulator of transcription. This is Putative protein SSX8 from Homo sapiens (Human).